A 127-amino-acid polypeptide reads, in one-letter code: Large ribosomal subunit protein bL12 (127 aa).

It belongs to the bacterial ribosomal protein bL12 family. Homodimer. Part of the ribosomal stalk of the 50S ribosomal subunit. Forms a multimeric L10(L12)X complex, where L10 forms an elongated spine to which 2 to 4 L12 dimers bind in a sequential fashion. Binds GTP-bound translation factors.

Its function is as follows. Forms part of the ribosomal stalk which helps the ribosome interact with GTP-bound translation factors. Is thus essential for accurate translation. The sequence is that of Large ribosomal subunit protein bL12 from Carboxydothermus hydrogenoformans (strain ATCC BAA-161 / DSM 6008 / Z-2901).